We begin with the raw amino-acid sequence, 338 residues long: Large ribosomal subunit protein uL3 (338 aa).

The span at 228–237 shows a compositional bias: basic residues; the sequence is HKHRKGHRRT. Residues 228 to 255 form a disordered region; sequence HKHRKGHRRTGTIGPQAPALMFTQPRPG.

The protein belongs to the universal ribosomal protein uL3 family. In terms of assembly, part of the 50S ribosomal subunit. Forms a cluster with proteins L14 and L24e.

One of the primary rRNA binding proteins, it binds directly near the 3'-end of the 23S rRNA, where it nucleates assembly of the 50S subunit. The polypeptide is Large ribosomal subunit protein uL3 (Pyrobaculum calidifontis (strain DSM 21063 / JCM 11548 / VA1)).